The primary structure comprises 447 residues: Aladin (447 aa).

Residues 49-69 (STPSSLQENEGQENGDKASGE) are disordered. WD repeat units follow at residues 97–138 (LSEI…EPCI), 142–181 (DSQRNVKALEWRPNGGKSLSIACRGGICIWAASYPGNMAL), 210–250 (QNDE…GTPI), and 252–291 (RGLGGISMLKWSPTGDYFFAARFDGTFCLWETNTWTSEPW).

In terms of assembly, part of the nuclear pore complex (NPC). The NPC has an eight-fold symmetrical structure comprising a central transport channel and two rings, the cytoplasmic and nuclear rings, to which eight filaments are attached. The cytoplasmic filaments have loose ends, while the nuclear filaments are joined in a distal ring, forming a nuclear basket. NPCs are highly dynamic in configuration and composition, and can be devided in 3 subcomplexes, the NUP62 subcomplex, the NUP107-160 subcomplex and the NUP93 subcomplex, containing approximately 30 different nucleoporin proteins.

It localises to the nucleus envelope. Its subcellular location is the nucleus. It is found in the nuclear pore complex. The sequence is that of Aladin from Arabidopsis thaliana (Mouse-ear cress).